A 505-amino-acid polypeptide reads, in one-letter code: MALSGLGSGPEGNPNNHQGKAIPTLNPSHGQGPSFLFSWVSFLVPFWSWYPFSPLPLKGIPGENSSSPNGLKNFHGIGLNGTERGMGHFHPISGNRLGLRLTLVAGWFLEPFPTFLAVLIRTQGDSTPSRSFVAFFVGTLGLGQEGITGSFNRKIAGPATIDPQDWAMEEGVLTNFLWPPFTTFFRTTKGFPVQWHGEGSFVVPGIFSLPQPLPWWLLLPDTPTGAGKPPESRQHQPSHSMNGAIVDIPGGLTQTPSSPDRSSSTNSIADEEKKLDYKPTSPTSDTEKGESLPLTASQSEIIASPTFSEMIRVIFSGPTLVLGACYFCTFGAELSINSVLGTFYQRQLGLGLQNAGNLAAIFGLLNIVMRPLGGMASDLLYRKTGSVWSKKALLHTYCVMTGVFCIAIGLARSRSQATLVGLVSGGLAFFLEGANGLTYSHVHPYANGVVSGFTGACGNLGGIVFAIVFRYNSLDYSKVFWIIGAIIIGLQVATCWIKPVPKSVI.

Residues 1–10 (MALSGLGSGP) are compositionally biased toward gly residues. The disordered stretch occupies residues 1 to 25 (MALSGLGSGPEGNPNNHQGKAIPTL). The helical transmembrane segment at 35 to 55 (FLFSWVSFLVPFWSWYPFSPL) threads the bilayer. N-linked (GlcNAc...) asparagine glycosylation is found at Asn-64 and Asn-80. The interval 221 to 295 (DTPTGAGKPP…TEKGESLPLT (75 aa)) is disordered. Over residues 255 to 267 (TPSSPDRSSSTNS) the composition is skewed to low complexity. A run of 6 helical transmembrane segments spans residues 313 to 333 (VIFSGPTLVLGACYFCTFGAE), 348 to 368 (LGLGLQNAGNLAAIFGLLNIV), 391 to 411 (KALLHTYCVMTGVFCIAIGLA), 417 to 437 (ATLVGLVSGGLAFFLEGANGL), 449 to 469 (VVSGFTGACGNLGGIVFAIVF), and 479 to 499 (VFWIIGAIIIGLQVATCWIKP).

This sequence belongs to the major facilitator superfamily. Nitrate/nitrite porter (TC 2.A.1.8) family.

The protein localises to the cell membrane. In terms of biological role, major facilitator-type transporter; part of the gene cluster that mediates the biosynthesis of elsinochromes, pigments consisting of at least four interconvertible tautomers (A, B, C and D) that have a core phenolic quinone to which various side chains are attached and which play an important role in fungal pathogenesis. Once elsinochrome is synthesized, it must be exported outside the fungal cells, which is probably accomplished by the ECT1 transporter, to avoid toxicity. This is Elsinochrome transporter 1 from Elsinoe fawcettii (Citrus scab fungus).